We begin with the raw amino-acid sequence, 629 residues long: (-)-alpha-pinene synthase, chloroplastic (629 aa).

The transit peptide at 1–48 directs the protein to the chloroplast; sequence MSPVSVISLPSDLCLPTSFIDRSGRELIPLHITIPNVAMRRQGKLMTR. Mg(2+) is bound by residues Asp380, Asp384, and Asp532. Residues 380–384 carry the DDXXD motif motif; that stretch reads DDMYD. Ser540 contacts K(+).

The protein belongs to the terpene synthase family. Tpsd subfamily. The cofactor is Mg(2+). Mn(2+) serves as cofactor. Requires K(+) as cofactor.

Its subcellular location is the plastid. It is found in the chloroplast. The catalysed reaction is (2E)-geranyl diphosphate = (1S,5S)-alpha-pinene + diphosphate. The protein operates within terpene metabolism; oleoresin biosynthesis. Functionally, involved in defensive oleoresin formation in conifers in response to insect attack or other injury. Involved in monoterpene (C10) olefins biosynthesis. Produces mainly (-)-alpha-pinene (79%) and lesser amounts of (-)-beta-pinene (4.2%), nearly racemic mixtures of camphene (2.8% (+)/2.2% (-)) and limonene (2.4% (+)/3.7% (-)), as well as small amounts of (+)-alpha-pinene (3.3%) and (+)-beta-pinene (2.4%). This Pinus taeda (Loblolly pine) protein is (-)-alpha-pinene synthase, chloroplastic (PT1).